Here is a 119-residue protein sequence, read N- to C-terminus: uncharacterized protein (119 aa).

C13 is an active-site residue.

This sequence belongs to the ArsC family.

This is an uncharacterized protein from Escherichia coli (strain K12).